We begin with the raw amino-acid sequence, 231 residues long: 7-cyano-7-deazaguanine synthase (231 aa).

8–18 lines the ATP pocket; that stretch reads FSGGQDSTTCL. Zn(2+)-binding residues include Cys188, Cys197, Cys200, and Cys203.

It belongs to the QueC family. Zn(2+) is required as a cofactor.

It carries out the reaction 7-carboxy-7-deazaguanine + NH4(+) + ATP = 7-cyano-7-deazaguanine + ADP + phosphate + H2O + H(+). It functions in the pathway purine metabolism; 7-cyano-7-deazaguanine biosynthesis. Its function is as follows. Catalyzes the ATP-dependent conversion of 7-carboxy-7-deazaguanine (CDG) to 7-cyano-7-deazaguanine (preQ(0)). This chain is 7-cyano-7-deazaguanine synthase, found in Escherichia fergusonii (strain ATCC 35469 / DSM 13698 / CCUG 18766 / IAM 14443 / JCM 21226 / LMG 7866 / NBRC 102419 / NCTC 12128 / CDC 0568-73).